The chain runs to 720 residues: Fatty acid CoA ligase Acsl3 (720 aa).

A helical; Signal-anchor for type III membrane protein membrane pass occupies residues 21 to 41 (ILLYFIHFLISLYTILTYIPF). At 42–720 (YFFSESRQEK…ADIERMYGRK (679 aa)) the chain is on the cytoplasmic side. Ser683 bears the Phosphoserine mark.

Belongs to the ATP-dependent AMP-binding enzyme family. Requires Mg(2+) as cofactor.

The protein localises to the mitochondrion outer membrane. The protein resides in the peroxisome membrane. It is found in the microsome membrane. Its subcellular location is the endoplasmic reticulum membrane. The enzyme catalyses a long-chain fatty acid + ATP + CoA = a long-chain fatty acyl-CoA + AMP + diphosphate. It catalyses the reaction (5Z,8Z,11Z,14Z)-eicosatetraenoate + ATP + CoA = (5Z,8Z,11Z,14Z)-eicosatetraenoyl-CoA + AMP + diphosphate. The catalysed reaction is (E)-hexadec-2-enoate + ATP + CoA = (2E)-hexadecenoyl-CoA + AMP + diphosphate. It carries out the reaction 15-hydroxy-(5Z,8Z,11Z,13E)-eicosatetraenoate + ATP + CoA = 15-hydroxy-(5Z,8Z,11Z,13E)-eicosatetraenoyl-CoA + AMP + diphosphate. The enzyme catalyses 12-hydroxy-(5Z,8Z,10E,14Z)-eicosatetraenoate + ATP + CoA = 12-hydroxy-(5Z,8Z,10E,14Z)-eicosatetraenoyl-CoA + AMP + diphosphate. It catalyses the reaction 5-hydroxy-(6E,8Z,11Z,14Z)-eicosatetraenoate + ATP + CoA = 5-hydroxy-(6E,8Z,11Z,14Z)-eicosatetraenoyl-CoA + AMP + diphosphate. The catalysed reaction is 14,15-epoxy-(5Z,8Z,11Z)-eicosatrienoate + ATP + CoA = 14,15-epoxy-(5Z,8Z,11Z)-eicosatrienoyl-CoA + AMP + diphosphate. It carries out the reaction 11,12-epoxy-(5Z,8Z,14Z)-eicosatrienoate + ATP + CoA = 11,12-epoxy-(5Z,8Z,14Z)-eicosatrienoyl-CoA + AMP + diphosphate. The enzyme catalyses a medium-chain fatty acid + ATP + CoA = a medium-chain fatty acyl-CoA + AMP + diphosphate. It catalyses the reaction hexadecanoate + ATP + CoA = hexadecanoyl-CoA + AMP + diphosphate. The catalysed reaction is tetradecanoate + ATP + CoA = tetradecanoyl-CoA + AMP + diphosphate. It carries out the reaction dodecanoate + ATP + CoA = dodecanoyl-CoA + AMP + diphosphate. The enzyme catalyses octadecanoate + ATP + CoA = octadecanoyl-CoA + AMP + diphosphate. It catalyses the reaction eicosanoate + ATP + CoA = eicosanoyl-CoA + AMP + diphosphate. The catalysed reaction is (9Z)-octadecenoate + ATP + CoA = (9Z)-octadecenoyl-CoA + AMP + diphosphate. It carries out the reaction (9Z)-hexadecenoate + ATP + CoA = (9Z)-hexadecenoyl-CoA + AMP + diphosphate. The enzyme catalyses (9Z,12Z)-octadecadienoate + ATP + CoA = (9Z,12Z)-octadecadienoyl-CoA + AMP + diphosphate. It catalyses the reaction (9Z,12Z,15Z)-octadecatrienoate + ATP + CoA = (9Z,12Z,15Z)-octadecatrienoyl-CoA + AMP + diphosphate. The catalysed reaction is (4Z,7Z,10Z,13Z,16Z,19Z)-docosahexaenoate + ATP + CoA = (4Z,7Z,10Z,13Z,16Z,19Z)-docosahexaenoyl-CoA + AMP + diphosphate. It carries out the reaction (5Z,8Z,11Z,14Z,17Z)-eicosapentaenoate + ATP + CoA = (5Z,8Z,11Z,14Z,17Z)-eicosapentaenoyl-CoA + AMP + diphosphate. The enzyme catalyses a fatty acid + ATP + CoA = a fatty acyl-CoA + AMP + diphosphate. Its function is as follows. Acyl-CoA synthetases (ACSL) activates long-chain fatty acids for both synthesis of cellular lipids, and degradation via beta-oxidation. Required for the incorporation of fatty acids into phosphatidylcholine, the major phospholipid located on the surface of VLDL (very low density lipoproteins). Has mainly an anabolic role in energy metabolism. Mediates hepatic lipogenesis. Preferentially uses myristate, laurate, arachidonate and eicosapentaenoate as substrates. Both isoforms exhibit the same level of activity. In Homo sapiens (Human), this protein is Fatty acid CoA ligase Acsl3.